The following is a 1163-amino-acid chain: Rho GTPase-activating protein 45 (1163 aa).

The tract at residues 1 to 99 (MFSRKKRELM…KRPTSLSRHA (99 aa)) is disordered. 2 positions are modified to phosphoserine: Ser-23 and Ser-25. Positions 55 to 65 (LPKELPRKDGA) are enriched in basic and acidic residues. Phosphoserine is present on residues Ser-100, Ser-120, and Ser-126. 3 disordered regions span residues 118 to 137 (HRSP…GTGP), 262 to 282 (PPGD…EGTP), and 454 to 475 (EEEQ…LDKR). An F-BAR domain is found at 296-566 (EEVDVLLQRC…SSKLYDPGQQ (271 aa)). Residues 403-526 (EHEKRRKEIK…QIQEVIRQSD (124 aa)) are a coiled coil. The segment covering 458 to 470 (AGTAPGAGSTATK) has biased composition (low complexity). A phosphoserine mark is found at Ser-596, Ser-605, and Ser-619. The segment at 610-695 (DVAGPEAAGS…VDPEGGAGAS (86 aa)) is disordered. Positions 633 to 644 (KGHRAGRGHQVH) are enriched in basic residues. Ser-646 carries the post-translational modification Phosphoserine. Residues 673–682 (TSSSGTMSST) are compositionally biased toward low complexity. A Phorbol-ester/DAG-type zinc finger spans residues 729-774 (THRLRKLRTPAKCRECNSYVYFQGAECEECCLACHKKCLETLAIQC). Positions 788-1001 (QDFSHAARSA…TLIVHYGLVF (214 aa)) constitute a Rho-GAP domain. 4 positions are modified to phosphoserine: Ser-976, Ser-1054, Ser-1057, and Ser-1059. Disordered stretches follow at residues 1042 to 1067 (AAED…ASEL) and 1087 to 1163 (SEAS…PEFV). Residues 1087–1099 (SEASLEEASGSHS) show a composition bias toward low complexity. The segment covering 1125–1137 (SGFNTNQSNNVLQ) has biased composition (polar residues).

The protein resides in the cytoplasm. It localises to the cell projection. The protein localises to the ruffle membrane. Its function is as follows. Contains a GTPase activator for the Rho-type GTPases (RhoGAP) domain that would be able to negatively regulate the actin cytoskeleton as well as cell spreading. However, also contains N-terminally a BAR-domin which is able to play an autoinhibitory effect on this RhoGAP activity. This chain is Rho GTPase-activating protein 45, found in Pongo abelii (Sumatran orangutan).